A 104-amino-acid polypeptide reads, in one-letter code: Flagellar hook-basal body complex protein FliE (104 aa).

Belongs to the FliE family.

The protein resides in the bacterial flagellum basal body. This chain is Flagellar hook-basal body complex protein FliE, found in Salmonella agona (strain SL483).